The chain runs to 204 residues: LexA repressor (204 aa).

Positions Val-27–Ala-47 form a DNA-binding region, H-T-H motif. Catalysis depends on for autocatalytic cleavage activity residues Ser-126 and Lys-164.

This sequence belongs to the peptidase S24 family. Homodimer.

It catalyses the reaction Hydrolysis of Ala-|-Gly bond in repressor LexA.. Functionally, represses a number of genes involved in the response to DNA damage (SOS response), including recA and lexA. In the presence of single-stranded DNA, RecA interacts with LexA causing an autocatalytic cleavage which disrupts the DNA-binding part of LexA, leading to derepression of the SOS regulon and eventually DNA repair. This chain is LexA repressor, found in Listeria innocua serovar 6a (strain ATCC BAA-680 / CLIP 11262).